The primary structure comprises 264 residues: Thymidylate synthase (264 aa).

Position 21 (Arg21) interacts with dUMP. His51 provides a ligand contact to (6R)-5,10-methylene-5,6,7,8-tetrahydrofolate. 126–127 (RR) contributes to the dUMP binding site. Cys146 functions as the Nucleophile in the catalytic mechanism. DUMP contacts are provided by residues 166-169 (RSCD), Asn177, and 207-209 (HLY). Asp169 contacts (6R)-5,10-methylene-5,6,7,8-tetrahydrofolate. Residue Ala263 coordinates (6R)-5,10-methylene-5,6,7,8-tetrahydrofolate.

The protein belongs to the thymidylate synthase family. Bacterial-type ThyA subfamily. As to quaternary structure, homodimer.

It is found in the cytoplasm. It catalyses the reaction dUMP + (6R)-5,10-methylene-5,6,7,8-tetrahydrofolate = 7,8-dihydrofolate + dTMP. The protein operates within pyrimidine metabolism; dTTP biosynthesis. Its function is as follows. Catalyzes the reductive methylation of 2'-deoxyuridine-5'-monophosphate (dUMP) to 2'-deoxythymidine-5'-monophosphate (dTMP) while utilizing 5,10-methylenetetrahydrofolate (mTHF) as the methyl donor and reductant in the reaction, yielding dihydrofolate (DHF) as a by-product. This enzymatic reaction provides an intracellular de novo source of dTMP, an essential precursor for DNA biosynthesis. This Shewanella sp. (strain ANA-3) protein is Thymidylate synthase.